The primary structure comprises 72 residues: Conotoxin 3 (72 aa).

An N-terminal signal peptide occupies residues 1–22 (MKLTCVVIVAVLLLTACQLITA). Positions 23–46 (DDSRGTQEHRALRSDTKLSMLTLR) are excised as a propeptide. 3 disulfides stabilise this stretch: cysteine 47–cysteine 61, cysteine 54–cysteine 64, and cysteine 60–cysteine 71.

Belongs to the conotoxin O1 superfamily. In terms of tissue distribution, expressed by the venom duct.

The protein localises to the secreted. The protein is Conotoxin 3 of Conus striatus (Striated cone).